We begin with the raw amino-acid sequence, 366 residues long: Molybdopterin synthase catalytic subunit (366 aa).

Substrate contacts are provided by residues 101 to 102, lysine 117, and 124 to 126; these read HR and KKE.

Belongs to the MoaE family. MOCS2B subfamily. In terms of assembly, heterotetramer; composed of 2 small (Mocs2A) and 2 large (Mocs2B) subunits.

The protein localises to the cytoplasm. The catalysed reaction is 2 [molybdopterin-synthase sulfur-carrier protein]-C-terminal-Gly-aminoethanethioate + cyclic pyranopterin phosphate + H2O = molybdopterin + 2 [molybdopterin-synthase sulfur-carrier protein]-C-terminal Gly-Gly + 2 H(+). It participates in cofactor biosynthesis; molybdopterin biosynthesis. Its function is as follows. Catalytic subunit of the molybdopterin synthase complex, a complex that catalyzes the conversion of precursor Z into molybdopterin. Acts by mediating the incorporation of 2 sulfur atoms from thiocarboxylated Mocs2A into precursor Z to generate a dithiolene group. The chain is Molybdopterin synthase catalytic subunit from Drosophila mojavensis (Fruit fly).